Consider the following 148-residue polypeptide: Lysozyme C (148 aa).

The first 18 residues, 1–18, serve as a signal peptide directing secretion; it reads MKALIILGLVLLSVMVQA. Residues 19–148 enclose the C-type lysozyme domain; sequence KVFERCELAR…LRQYIQGCGV (130 aa). 4 disulfides stabilise this stretch: C24-C146, C48-C134, C83-C99, and C95-C113. Residues E53 and D71 contribute to the active site.

This sequence belongs to the glycosyl hydrolase 22 family. Monomer.

It localises to the secreted. It carries out the reaction Hydrolysis of (1-&gt;4)-beta-linkages between N-acetylmuramic acid and N-acetyl-D-glucosamine residues in a peptidoglycan and between N-acetyl-D-glucosamine residues in chitodextrins.. Lysozymes have primarily a bacteriolytic function; those in tissues and body fluids are associated with the monocyte-macrophage system and enhance the activity of immunoagents. The protein is Lysozyme C (LYZ) of Hylobates lar (Lar gibbon).